Consider the following 437-residue polypeptide: Probable indole-3-pyruvate monooxygenase YUCCA3 (437 aa).

41–46 (GAGPSG) contributes to the FAD binding site. 212–217 (GCGNSG) is a binding site for NADP(+).

The protein belongs to the FMO family. FAD serves as cofactor.

The enzyme catalyses indole-3-pyruvate + NADPH + O2 + H(+) = (indol-3-yl)acetate + CO2 + NADP(+) + H2O. The protein operates within plant hormone metabolism; auxin biosynthesis. In terms of biological role, involved in auxin biosynthesis. Belongs to the set of redundant YUCCA genes probably responsible for auxin biosynthesis in roots. In Arabidopsis thaliana (Mouse-ear cress), this protein is Probable indole-3-pyruvate monooxygenase YUCCA3 (YUC3).